A 593-amino-acid chain; its full sequence is Cyclin-dependent kinase-like 3 (593 aa).

Residues 4–286 (YETLGKVGEG…STDLLHHDYF (283 aa)) enclose the Protein kinase domain. Residues 10-18 (VGEGSYGTV) and K33 contribute to the ATP site. Residues 45–51 (KIATREI) carry the [NKR]KIAxRE motif. The active-site Proton acceptor is D125. A Phosphothreonine modification is found at T158. Position 160 is a phosphotyrosine (Y160). The span at 368-403 (GKGDVPDLKKTESEGEHRQQGTAEDTHPTSLDRKPS) shows a compositional bias: basic and acidic residues. The segment at 368–512 (GKGDVPDLKK…NDQIASGNKR (145 aa)) is disordered. Low complexity predominate over residues 436 to 452 (NLTSSNLLAANPSSNLS). 2 stretches are compositionally biased toward polar residues: residues 468 to 491 (SSQTIGQTLSNSRQEDTGPTQVQT) and 499 to 508 (RTGQNDQIAS).

It belongs to the protein kinase superfamily. CMGC Ser/Thr protein kinase family. CDC2/CDKX subfamily. In terms of tissue distribution, highly expressed in brain, and to a lower extent in heart and testis.

It localises to the nucleus. It is found in the cytoplasm. The enzyme catalyses L-seryl-[protein] + ATP = O-phospho-L-seryl-[protein] + ADP + H(+). It carries out the reaction L-threonyl-[protein] + ATP = O-phospho-L-threonyl-[protein] + ADP + H(+). The sequence is that of Cyclin-dependent kinase-like 3 from Rattus norvegicus (Rat).